Reading from the N-terminus, the 191-residue chain is UPF0149 protein VC_2476 (191 aa).

It belongs to the UPF0149 family.

The protein is UPF0149 protein VC_2476 of Vibrio cholerae serotype O1 (strain ATCC 39315 / El Tor Inaba N16961).